A 263-amino-acid polypeptide reads, in one-letter code: 5'-nucleotidase SurE (263 aa).

The a divalent metal cation site is built by Asp-21, Asp-22, Ser-52, and Asn-105.

This sequence belongs to the SurE nucleotidase family. A divalent metal cation serves as cofactor.

Its subcellular location is the cytoplasm. The catalysed reaction is a ribonucleoside 5'-phosphate + H2O = a ribonucleoside + phosphate. Nucleotidase that shows phosphatase activity on nucleoside 5'-monophosphates. The protein is 5'-nucleotidase SurE of Vibrio cholerae serotype O1 (strain ATCC 39541 / Classical Ogawa 395 / O395).